Here is a 114-residue protein sequence, read N- to C-terminus: Replication initiation control protein YabA (114 aa).

Residues His79, Cys81, Cys95, and Cys98 each coordinate Zn(2+).

It belongs to the YabA family. As to quaternary structure, homotetramer. Interacts with both DnaA and DnaN, acting as a bridge between these two proteins. It depends on Zn(2+) as a cofactor.

It localises to the cytoplasm. Its subcellular location is the nucleoid. Involved in control of chromosome replication initiation. Inhibits the cooperative binding of DnaA to the oriC region, thus negatively regulating initiation of chromosome replication. Inhibits the ability of DnaA-ATP to form a helix on DNA; does not disassemble preformed DnaA-DNA helices. Decreases the residence time of DnaA on the chromosome at its binding sites (oriC, replication forks and promoter-binding sites). Tethers DnaA to the replication machinery via the DNA polymerase beta sliding clamp subunit (dnaN). Associates with oriC and other DnaA targets on the chromosome in a DnaA-dependent manner. The chain is Replication initiation control protein YabA from Lactobacillus gasseri (strain ATCC 33323 / DSM 20243 / BCRC 14619 / CIP 102991 / JCM 1131 / KCTC 3163 / NCIMB 11718 / NCTC 13722 / AM63).